We begin with the raw amino-acid sequence, 685 residues long: Amino acid transporter heavy chain SLC3A1 (685 aa).

Residues 1 to 11 (MAEDKSKRDSI) show a composition bias toward basic and acidic residues. The tract at residues 1–56 (MAEDKSKRDSIEMSMKGCQTNNGFVHNEDILEQTPDPGSSTDNLKHSTRGILGSQE) is disordered. The Cytoplasmic portion of the chain corresponds to 1 to 87 (MAEDKSKRDS…GQARYRIPRE (87 aa)). Serine 10 bears the Phosphoserine mark. Residues 88–108 (ILFWLTVASVLVLIAATIAII) traverse the membrane as a helical; Signal-anchor for type II membrane protein segment. Over 109-685 (ALSPKCLDWW…SVLNILYTSC (577 aa)) the chain is Extracellular. Asparagine 214 is a binding site for Ca(2+). Asparagine 214 and asparagine 261 each carry an N-linked (GlcNAc...) asparagine glycan. Cysteine 242 and cysteine 273 are disulfide-bonded. Positions 284, 318, 319, and 321 each coordinate Ca(2+). N-linked (GlcNAc...) asparagine glycosylation is found at asparagine 332, asparagine 495, asparagine 513, and asparagine 575. 2 disulfide bridges follow: cysteine 571–cysteine 666 and cysteine 673–cysteine 685.

In terms of assembly, disulfide-linked heterodimer composed of the catalytic light subunit SLC7A9 and the heavy subunit SLC3A1. The heterodimer is the minimal functional unit. Assembles in non-covalently linked heterotetramers (dimers of heterodimers) and higher order oligomers; the oligomerization is mediated by SLC3A1 likely to prevent degradation in the endoplasmic reticulum and facilitate heteromer trafficking to the plasma membrane. Disulfide-linked heterodimer composed of the catalytic light subunit SLC7A13 and the heavy subunit SLC3A1. Expressed in the brush border membrane in the kidney (at protein level). Predominantly expressed in the kidney, small intestine and pancreas. Weakly expressed in liver.

It localises to the cell membrane. The protein resides in the apical cell membrane. Functionally, acts as a chaperone that facilitates biogenesis and trafficking of functional transporter heteromers to the plasma membrane. Associates with SLC7A9 to form a functional transporter complex that mediates the electrogenic exchange between cationic amino acids and neutral amino acids, with a stoichiometry of 1:1. SLC7A9-SLC3A1 transporter has system b(0,+)-like activity with high affinity for extracellular cationic amino acids and L-cystine and lower affinity for intracellular neutral amino acids. Substrate exchange is driven by high concentration of intracellular neutral amino acids and the intracellular reduction of L-cystine to L-cysteine. SLC7A9-SLC3A1 acts as a major transporter for reabsorption of L-cystine and dibasic amino acids across the brush border membrane in early proximal tubules. Associates with SLC7A13 to form a functional complex that transports anionic and neutral amino acids via exchange or facilitated diffusion. SLC7A13-SLC3A1 may act as a major transporter for L-cystine in late proximal tubules, ensuring its reabsorption from the luminal fluid in exchange for cytosolic L-glutamate or L-aspartate. The sequence is that of Amino acid transporter heavy chain SLC3A1 from Homo sapiens (Human).